Consider the following 370-residue polypeptide: 3-dehydroquinate synthase (370 aa).

NAD(+)-binding positions include 112-116, 136-137, Lys149, Lys158, and 176-179; these read GVIGD, TT, and TLAT. Residues Glu191, His254, and His276 each contribute to the Zn(2+) site.

The protein belongs to the sugar phosphate cyclases superfamily. Dehydroquinate synthase family. The cofactor is Co(2+). Zn(2+) serves as cofactor. NAD(+) is required as a cofactor.

The protein resides in the cytoplasm. It catalyses the reaction 7-phospho-2-dehydro-3-deoxy-D-arabino-heptonate = 3-dehydroquinate + phosphate. The protein operates within metabolic intermediate biosynthesis; chorismate biosynthesis; chorismate from D-erythrose 4-phosphate and phosphoenolpyruvate: step 2/7. Functionally, catalyzes the conversion of 3-deoxy-D-arabino-heptulosonate 7-phosphate (DAHP) to dehydroquinate (DHQ). This chain is 3-dehydroquinate synthase, found in Xylella fastidiosa (strain M12).